A 135-amino-acid chain; its full sequence is Ribonuclease P protein component (135 aa).

Residues 115–135 (TNETVSPVSDTPLPQHERGSQ) are disordered.

This sequence belongs to the RnpA family. In terms of assembly, consists of a catalytic RNA component (M1 or rnpB) and a protein subunit.

It carries out the reaction Endonucleolytic cleavage of RNA, removing 5'-extranucleotides from tRNA precursor.. RNaseP catalyzes the removal of the 5'-leader sequence from pre-tRNA to produce the mature 5'-terminus. It can also cleave other RNA substrates such as 4.5S RNA. The protein component plays an auxiliary but essential role in vivo by binding to the 5'-leader sequence and broadening the substrate specificity of the ribozyme. The protein is Ribonuclease P protein component of Chloroflexus aurantiacus (strain ATCC 29366 / DSM 635 / J-10-fl).